A 412-amino-acid chain; its full sequence is MILTSVLGSGPRSGSSLWPLLGSSLSLRVRSTSATDTHHVELARERSKTVTSFYNQSAIDVVAEKPSVRLTPTMMLYSGRSQDGSHLLKSGRYLQQELPVRIAHRIKGFRSLPFIIGCNPTILHVHELYIRAFQKLTDFPPIKDQADEAQYCQLVRQLLDDHKDVVTLLAEGLRESRKHIEDEKLVRYFLDKTLTSRLGIRMLATHHLALHEDKPDFVGIICTRLSPKKIIEKWVDFARRLCEHKYGNAPRVRINGHVAARFPFIPMPLDYILPELLKNAMRATMESHLDTPYNVPDVVITIANNDVDLIIRISDRGGGIAHKDLDRVMDYHFTTAEASTQDPRISPLFGHLDMHSGGQSGPMHGFGFGLPTSRAYAEYLGGSLQLQSLQGIGTDVYLRLRHIDGREESFRI.

A mitochondrion-targeting transit peptide spans 1–30 (MILTSVLGSGPRSGSSLWPLLGSSLSLRVR). A Phosphoserine modification is found at Ser-31. Positions 159 to 404 (LDDHKDVVTL…DVYLRLRHID (246 aa)) constitute a Histidine kinase domain. An N6-acetyllysine mark is found at Lys-192 and Lys-233. Asn-279 and Asp-315 together coordinate ATP. Asn-279 serves as a coordination point for Mg(2+). 3 residues coordinate K(+): Val-328, Asp-330, and Phe-333. Thr-334 and Thr-335 together coordinate ATP. 2 positions are modified to phosphoserine: Ser-356 and Ser-360. ATP contacts are provided by His-364, Gly-367, and Leu-370. Position 367 (Gly-367) interacts with K(+).

Belongs to the PDK/BCKDK protein kinase family. Homodimer. Homotetramer. Dimerizes through interaction of two opposing nucleotide-binding domains. Interacts with E2 component of the branched-chain alpha-ketoacid dehydrogenase (BCKDH) complex. Competes with BCKDK for binding to the E2 component; this interaction is modulated by branched-chain alpha-keto acids. At steady state, BCKDH holoenzyme contains BCKDK and BCKDHA is phosphorylated. In response to high levels of branched-chain alpha-keto acids, the inhibitory BCKDK is replaced by activating PPM1K leading to BCKDHA dephosphorylation and BCAA degradation. Post-translationally, autophosphorylated. Expressed in heart and liver.

It localises to the mitochondrion matrix. The protein localises to the mitochondrion. The enzyme catalyses L-seryl-[3-methyl-2-oxobutanoate dehydrogenase] + ATP = O-phospho-L-seryl-[3-methyl-2-oxobutanoate dehydrogenase] + ADP + H(+). The catalysed reaction is L-seryl-[protein] + ATP = O-phospho-L-seryl-[protein] + ADP + H(+). The ATP-ase activity is up-regulated by potassium and rubidium ions but not by sodium ions. Up-regulated in the presence of apo- or lipoylated-DBT/E2b subunit of the BCKDH complex. In terms of biological role, serine/threonine-protein kinase component of macronutrients metabolism. Forms a functional kinase and phosphatase pair with PPM1K, serving as a metabolic regulatory node that coordinates branched-chain amino acids (BCAAs) with glucose and lipid metabolism via two distinct phosphoprotein targets: mitochondrial BCKDHA subunit of the branched-chain alpha-ketoacid dehydrogenase (BCKDH) complex and cytosolic ACLY, a lipogenic enzyme of Krebs cycle. Phosphorylates and inactivates mitochondrial BCKDH complex a multisubunit complex consisting of three multimeric components each involved in different steps of BCAA catabolism: E1 composed of BCKDHA and BCKDHB, E2 core composed of DBT monomers, and E3 composed of DLD monomers. Associates with the E2 component of BCKDH complex and phosphorylates BCKDHA on Ser-333, leading to conformational changes that interrupt substrate channeling between E1 and E2 and inactivates the BCKDH complex. phosphorylates ACLY on Ser-455 in response to changes in cellular carbohydrate abundance such as occurs during fasting to feeding metabolic transition. Refeeding stimulates MLXIPL/ChREBP transcription factor, leading to increased BCKDK to PPM1K expression ratio, phosphorylation and activation of ACLY that ultimately results in the generation of malonyl-CoA and oxaloacetate immediate substrates of de novo lipogenesis and glucogenesis, respectively. Recognizes phosphosites having SxxE/D canonical motif. The polypeptide is Branched-chain alpha-ketoacid dehydrogenase kinase (Bckdk) (Rattus norvegicus (Rat)).